We begin with the raw amino-acid sequence, 197 residues long: Small ribosomal subunit protein uS4B (197 aa).

In terms of domain architecture, S4 RNA-binding spans 88–153 (CRLDNMVYRM…IEKYLSNLKN (66 aa)).

It belongs to the universal ribosomal protein uS4 family. Part of the 30S ribosomal subunit. Contacts protein S5. The interaction surface between S4 and S5 is involved in control of translational fidelity.

In terms of biological role, one of the primary rRNA binding proteins, it binds directly to 16S rRNA where it nucleates assembly of the body of the 30S subunit. With S5 and S12 plays an important role in translational accuracy. The sequence is that of Small ribosomal subunit protein uS4B from Alkaliphilus oremlandii (strain OhILAs) (Clostridium oremlandii (strain OhILAs)).